Reading from the N-terminus, the 265-residue chain is H-2 class II histocompatibility antigen, A-Q beta chain (265 aa).

Residues 1–27 form the signal peptide; that stretch reads MALQIPSLLLSAAVVVLMVLSSPRTEG. Residues 28–122 form a beta-1 region; sequence GNSERHFVAQ…VETHTSLRRL (95 aa). Topologically, residues 28–227 are extracellular; that stretch reads GNSERHFVAQ…AQSESARSKM (200 aa). 2 cysteine pairs are disulfide-bonded: Cys42/Cys106 and Cys145/Cys201. Asn46 carries an N-linked (GlcNAc...) asparagine glycan. The segment at 123–217 is beta-2; sequence EQPNVAISLS…LKSPITVEWR (95 aa). The Ig-like C1-type domain occupies 125-213; it reads PNVAISLSRT…EHPSLKSPIT (89 aa). Residues 218-227 are connecting peptide; sequence AQSESARSKM. A helical transmembrane segment spans residues 228-247; the sequence is LSGIGGCVLGVIFLGLGLFI. Over 248–265 the chain is Cytoplasmic; the sequence is RHRSQKGPRGPPPAGLLQ.

It belongs to the MHC class II family. Ubiquitinated in immature dendritic cells leading to down-regulation of MHC class II.

The protein resides in the membrane. In Mus musculus (Mouse), this protein is H-2 class II histocompatibility antigen, A-Q beta chain (H2-Ab1).